A 679-amino-acid chain; its full sequence is Altered inheritance of mitochondria protein 21 (679 aa).

Residues 1–85 (MPSEVTPKVP…LQRPVRRSTT (85 aa)) are disordered. Positions 9 to 19 (VPERPSRRKTS) are enriched in basic and acidic residues. The residue at position 18 (threonine 18) is a Phosphothreonine. Serine 36 bears the Phosphoserine mark. Threonine 58 carries the phosphothreonine modification. Serine 70 is modified (phosphoserine). A Phosphothreonine modification is found at threonine 85. Serine 104 carries the post-translational modification Phosphoserine. Basic residues predominate over residues 110–119 (NIHNVSRKKS). 3 disordered regions span residues 110–522 (NIHN…EKIE), 549–580 (IDTT…PNKM), and 593–679 (EKLP…FHSL). Polar residues-rich tracts occupy residues 133-149 (QNGQ…TNPS) and 164-178 (SAIS…SNNE). Residues 179 to 213 (VTEHSDSEDLTEKQKVHAALDNEAGDRSHFEEKLI) show a composition bias toward basic and acidic residues. Serine 183, serine 206, and serine 231 each carry phosphoserine. Basic and acidic residues predominate over residues 243–272 (SDDKAEKFTKHPESSLEELQKHQEQQEEKI). A Phosphothreonine modification is found at threonine 277. At serine 284 the chain carries Phosphoserine. Polar residues predominate over residues 296-323 (EVNSQPQGPSDTETVIAATSSNVPSQIA). Residue serine 324 is modified to Phosphoserine. Basic and acidic residues-rich tracts occupy residues 339–361 (KKDF…RVSE) and 372–383 (EESKIPKIPSER). The interval 383-396 (RPKRRAPPPVPKKP) is interaction with SH3 domain of ABP1. 2 stretches are compositionally biased toward polar residues: residues 414–427 (DLHN…TTAS) and 437–452 (SSIT…TSKL). The span at 471-482 (LEKKLSSPDTES) shows a compositional bias: basic and acidic residues. Residues 501–512 (RRGRGPRGRKLP) show a composition bias toward basic residues. Residue threonine 552 is modified to Phosphothreonine. The segment covering 556-576 (QAERALDEKSKSIPEEQREQS) has biased composition (basic and acidic residues). Serine 576 is modified (phosphoserine). Over residues 603–613 (PLSQLPQTNAV) the composition is skewed to polar residues. Phosphoserine is present on residues serine 620, serine 623, serine 625, serine 627, serine 667, serine 671, serine 675, and serine 678. The segment covering 667–679 (SALHSEEASFHSL) has biased composition (basic and acidic residues).

Belongs to the AIM21 family. Interacts with ribosomes. Interacts with ABP1.

The protein localises to the cytoplasm. It is found in the cytoskeleton. Its subcellular location is the actin patch. Its function is as follows. Involved in mitochondrial migration along actin filaments. The protein is Altered inheritance of mitochondria protein 21 (AIM21) of Saccharomyces cerevisiae (strain ATCC 204508 / S288c) (Baker's yeast).